A 126-amino-acid chain; its full sequence is Prefoldin subunit beta (126 aa).

It belongs to the prefoldin subunit beta family. In terms of assembly, heterohexamer of two alpha and four beta subunits.

Its subcellular location is the cytoplasm. In terms of biological role, molecular chaperone capable of stabilizing a range of proteins. Seems to fulfill an ATP-independent, HSP70-like function in archaeal de novo protein folding. In Saccharolobus islandicus (strain Y.N.15.51 / Yellowstone #2) (Sulfolobus islandicus), this protein is Prefoldin subunit beta.